Consider the following 137-residue polypeptide: uncharacterized protein (137 aa).

The signal sequence occupies residues Met1 to Ala19.

This is an uncharacterized protein from Acanthamoeba polyphaga (Amoeba).